Reading from the N-terminus, the 390-residue chain is Phosphopentomutase (390 aa).

Asp14, Asp286, His291, Asp327, His328, and His339 together coordinate Mn(2+).

This sequence belongs to the phosphopentomutase family. Mn(2+) serves as cofactor.

The protein resides in the cytoplasm. It catalyses the reaction 2-deoxy-alpha-D-ribose 1-phosphate = 2-deoxy-D-ribose 5-phosphate. The enzyme catalyses alpha-D-ribose 1-phosphate = D-ribose 5-phosphate. It functions in the pathway carbohydrate degradation; 2-deoxy-D-ribose 1-phosphate degradation; D-glyceraldehyde 3-phosphate and acetaldehyde from 2-deoxy-alpha-D-ribose 1-phosphate: step 1/2. In terms of biological role, isomerase that catalyzes the conversion of deoxy-ribose 1-phosphate (dRib-1-P) and ribose 1-phosphate (Rib-1-P) to deoxy-ribose 5-phosphate (dRib-5-P) and ribose 5-phosphate (Rib-5-P), respectively. The protein is Phosphopentomutase of Exiguobacterium sibiricum (strain DSM 17290 / CCUG 55495 / CIP 109462 / JCM 13490 / 255-15).